We begin with the raw amino-acid sequence, 618 residues long: Isocitrate dehydrogenase kinase/phosphatase (618 aa).

ATP-binding positions include 332–338 (APGIKGM) and lysine 353. The active site involves aspartate 388.

This sequence belongs to the AceK family.

It localises to the cytoplasm. The enzyme catalyses L-seryl-[isocitrate dehydrogenase] + ATP = O-phospho-L-seryl-[isocitrate dehydrogenase] + ADP + H(+). In terms of biological role, bifunctional enzyme which can phosphorylate or dephosphorylate isocitrate dehydrogenase (IDH) on a specific serine residue. This is a regulatory mechanism which enables bacteria to bypass the Krebs cycle via the glyoxylate shunt in response to the source of carbon. When bacteria are grown on glucose, IDH is fully active and unphosphorylated, but when grown on acetate or ethanol, the activity of IDH declines drastically concomitant with its phosphorylation. The polypeptide is Isocitrate dehydrogenase kinase/phosphatase (Methylibium petroleiphilum (strain ATCC BAA-1232 / LMG 22953 / PM1)).